A 178-amino-acid polypeptide reads, in one-letter code: MIRDILKMGDERLLRIAPPVPEHMLGSAELQQLIDDMFETMRHVGGVGLAAPQVGIDLQLVIFGFERSERYPDAEAVPQTILLNPVITPTSSEVEDGWEGCLSVPGLRGVVPRFKHICYQGIDPQGSPINRFADGFHARVVQHECDHLIGRLYPSRIQDFAKFGYTEVLFPGLEVSED.

Residues Cys-101 and His-143 each coordinate Fe cation. Glu-144 is a catalytic residue. A Fe cation-binding site is contributed by His-147.

It belongs to the polypeptide deformylase family. The cofactor is Fe(2+).

The catalysed reaction is N-terminal N-formyl-L-methionyl-[peptide] + H2O = N-terminal L-methionyl-[peptide] + formate. In terms of biological role, removes the formyl group from the N-terminal Met of newly synthesized proteins. Requires at least a dipeptide for an efficient rate of reaction. N-terminal L-methionine is a prerequisite for activity but the enzyme has broad specificity at other positions. The chain is Peptide deformylase 2 from Pseudomonas putida (strain ATCC 47054 / DSM 6125 / CFBP 8728 / NCIMB 11950 / KT2440).